A 1778-amino-acid polypeptide reads, in one-letter code: Nuclear receptor corepressor 1 (1778 aa).

The SANT domain maps to 125 to 176 (DRLEEWSPEERSLFKSRQADHVKIFHGLTEFFVDKTASDLVLFYYMNKKTED). A Myb-like domain is found at 356–398 (WTDDEKTKLVTLINSSPTLDWVSISEGMNRRPNECKMQYDAMN). The span at 409–421 (VDEEDGNGQEEGG) shows a compositional bias: acidic residues. Disordered stretches follow at residues 409-671 (VDEE…TVST), 992-1024 (SLTPSETSASATPPAHRPRAATTVGSKMPAGRS), 1195-1218 (KLQQQHQDAQKRKLEAPVSSATPQ), 1276-1339 (QHLQ…SRSV), 1414-1434 (PPKTPASIKRLQPTEGPRTLS), and 1646-1718 (AAPT…PPLP). 2 stretches are compositionally biased toward low complexity: residues 431 to 442 (SSAAARRSGLAR) and 450 to 469 (TPRAPRSAGGRRTGGAVTRA). Positions 478–493 (DLGEEIDEMEIEDNDE) are enriched in acidic residues. Positions 494 to 513 (DASRGSRGKDSKAPSDRDGS) are enriched in basic and acidic residues. 2 stretches are compositionally biased toward acidic residues: residues 517-545 (MEGDSPEGQDQDADQDQDQDQDVDEEEEE) and 599-616 (ESDDGEEDNDILEIDVDE). Composition is skewed to low complexity over residues 626–639 (SSSSHLIGSSSVGG) and 649–671 (LVQQQQQQQPQAQSAAPPVTVST). Residues 1276 to 1285 (QHLQQQQQHH) show a composition bias toward low complexity. Residues 1687 to 1696 (SSVNSNVSDV) are compositionally biased toward low complexity.

Belongs to the N-CoR nuclear receptor corepressors family. Interacts with gex-3. Interacts (via C-terminus) with nhr-60. As to expression, in larvae, expressed in pharyngeal neurons, ventral and dorsal nerve cords, tail neurons, egg-laying neurons and egg-laying muscles. Detected in the neurons of the pharyngeal nerve ring, head neurons, tail neurons and egg-laying muscles in adults. Detected in male-specific tail ganglia and rays in males.

It is found in the nucleus. Functionally, mediates transcriptional repression by certain nuclear receptors. Plays a role in development and neuronal function. May play a role in muscle-specific oxidative mitochondrial metabolism. This Caenorhabditis elegans protein is Nuclear receptor corepressor 1.